The chain runs to 1379 residues: ATPase histone chaperone YTA7 (1379 aa).

Disordered stretches follow at residues 1–39 (MARN…TTTR) and 54–243 (DFLE…NSRN). At Ala-2 the chain carries N-acetylalanine. 2 positions are modified to phosphoserine: Ser-11 and Ser-17. Positions 61–78 (VMDKDETPVDVTSDEHHN) are enriched in basic and acidic residues. Phosphoserine is present on Ser-94. A compositionally biased stretch (basic and acidic residues) spans 97–110 (ENARTNEELTNERN). Composition is skewed to acidic residues over residues 119–152 (PEED…DEDS) and 170–184 (DPDD…DEEG). A compositionally biased stretch (basic residues) spans 192 to 207 (SSKRLKRANSRRTRSS). A Phosphothreonine modification is found at Thr-212. Over residues 218–228 (RALRSRTRHSR) the composition is skewed to basic residues. Thr-229 bears the Phosphothreonine mark. Residues Ser-241, Ser-259, and Ser-285 each carry the phosphoserine modification. The interval 302-330 (NPSPARRGRGGWNASQNSGPTRRLFPTGG) is disordered. Phosphoserine is present on residues Ser-367, Ser-369, and Ser-370. The segment at 375–396 (LPLGVTPKTKKENTQKKKKKKP) is disordered. Residues 450–578 (VLFHGPPGTG…PALRRPGRFD (129 aa)) are AAA-ATPase; required for its chromatin boundary function. An ATP-binding site is contributed by 454 to 461 (GPPGTGKT). A Phosphoserine modification is found at Ser-735. The Bromo domain maps to 974–1101 (RLKNVLKIKL…ANAQMGIEEI (128 aa)). Ser-1142 is modified (phosphoserine). Disordered regions lie at residues 1233 to 1274 (TCTS…ANTN) and 1291 to 1316 (LHET…GKKS). Basic and acidic residues predominate over residues 1244-1254 (ERARKEPKENE). Ser-1256 carries the post-translational modification Phosphoserine. Residues 1256-1274 (SLQTQVTEENFSKIDANTN) are compositionally biased toward polar residues. Basic and acidic residues predominate over residues 1293 to 1316 (ETVEKRERSPIPKEVVEPEQGKKS).

The protein belongs to the AAA ATPase family. Interacts with CSE4/CENP-A. Interacts with SCM3. Interacts with SPT16. Interacts with POB3. Interacts with the casein kinase II complex subunits CKA1, CKA2, CKB1 and CKB2. Interacts with RNA polymerase II. Interacts (via Bromo domain) with histone H3. Interacts (via Bromo domain) with histone H4. Post-translationally, phosphorylated by CDK1 and casein kinase II during S-phase, which leads to its eviction from histone gene promoters and promotes histone gene transcription.

The protein localises to the chromosome. It localises to the centromere. It is found in the nucleus. Functions as an ATP-dependent nucleosome disassembly factor that helps evict canonical histone H3 from the 5'-end of genes upon their induction. Also contributes to kinetochore assembly by cooperating with SCM3 to load the histone H3 variant CSE4/CENP-A at centromeres. Provides a chromatin boundary function at the 5'-end of genes that restricts access by RTT106 and thus prevents ectopic spreading of repressive chromatin into coding regions. Also prevents heterochromatin spreading downstream of the silent mating-type locus HMR, this function is independent of the tRNA boundary element. Contributes to appropriate cell cycle regulation of histone gene expression by recruiting RNA polymerase II to histone genes, and subsequent CDK1- and casein kinase II-dependent eviction from chromatin is required to promote transcriptional elongation. This chain is ATPase histone chaperone YTA7, found in Saccharomyces cerevisiae (strain ATCC 204508 / S288c) (Baker's yeast).